A 305-amino-acid chain; its full sequence is Glycine--tRNA ligase alpha subunit (305 aa).

This sequence belongs to the class-II aminoacyl-tRNA synthetase family. Tetramer of two alpha and two beta subunits.

It is found in the cytoplasm. The enzyme catalyses tRNA(Gly) + glycine + ATP = glycyl-tRNA(Gly) + AMP + diphosphate. The protein is Glycine--tRNA ligase alpha subunit of Streptococcus pneumoniae (strain 70585).